Consider the following 436-residue polypeptide: Trigger factor (436 aa).

The 86-residue stretch at glycine 164–proline 249 folds into the PPIase FKBP-type domain.

It belongs to the FKBP-type PPIase family. Tig subfamily.

The protein localises to the cytoplasm. The enzyme catalyses [protein]-peptidylproline (omega=180) = [protein]-peptidylproline (omega=0). In terms of biological role, involved in protein export. Acts as a chaperone by maintaining the newly synthesized protein in an open conformation. Functions as a peptidyl-prolyl cis-trans isomerase. This is Trigger factor from Limosilactobacillus reuteri (strain DSM 20016) (Lactobacillus reuteri).